We begin with the raw amino-acid sequence, 1504 residues long: DNA polymerase zeta catalytic subunit (1504 aa).

Zn(2+) contacts are provided by cysteine 1398, cysteine 1401, cysteine 1414, and cysteine 1417. The segment at 1398-1417 (CCNCGEELTKICSLQLCDDC) adopts a CysA-type zinc-finger fold. The [4Fe-4S] cluster site is built by cysteine 1446, cysteine 1449, cysteine 1468, and cysteine 1473. The CysB motif signature appears at 1446–1473 (CRTCSYRYTSDAGIENDHIASKCNSYDC).

This sequence belongs to the DNA polymerase type-B family. Forms DNA polymerase zeta with REV7. It depends on [4Fe-4S] cluster as a cofactor.

Its subcellular location is the mitochondrion. It is found in the nucleus. It catalyses the reaction DNA(n) + a 2'-deoxyribonucleoside 5'-triphosphate = DNA(n+1) + diphosphate. Nonessential DNA polymerase. Required for DNA damage induced mutagenesis. Involved in DNA repair, mitochondrial DNA repair and translesion synthesis. Translesion synthesis in S.cerevisiae may use a specialized DNA polymerase that is not required for other DNA replicative processes. Has a role in the bypass of abasic (AP) sites. Highly inefficient in incorporating nucleotides opposite the AP site, but efficiently extends from nucleotides, particularly an A, inserted opposite the lesion. In Saccharomyces cerevisiae (strain ATCC 204508 / S288c) (Baker's yeast), this protein is DNA polymerase zeta catalytic subunit (REV3).